A 769-amino-acid chain; its full sequence is Amino-acid acetyltransferase, mitochondrial (769 aa).

The tract at residues 150 to 172 is disordered; the sequence is LKASPAKSGQEPTESPKESISAS. A compositionally biased stretch (polar residues) spans 159-172; sequence QEPTESPKESISAS. An N-acetyltransferase domain is found at 590–759; it reads MQPRLGLNDP…YEAVCRSIQP (170 aa).

Belongs to the acetyltransferase family.

It localises to the mitochondrion. It catalyses the reaction L-glutamate + acetyl-CoA = N-acetyl-L-glutamate + CoA + H(+). It participates in amino-acid biosynthesis; L-arginine biosynthesis; N(2)-acetyl-L-ornithine from L-glutamate: step 1/4. Functionally, N-acetylglutamate synthase involved in arginine biosynthesis. The protein is Amino-acid acetyltransferase, mitochondrial (arg2) of Penicillium rubens (strain ATCC 28089 / DSM 1075 / NRRL 1951 / Wisconsin 54-1255) (Penicillium chrysogenum).